We begin with the raw amino-acid sequence, 108 residues long: MIKGQLAGLMKQAQAMQDNLKKAQDELANVEVEGQSGAGLVKVVMTCKHDVKRLSIDPSLLADDKDMLEDLVAAAFNDAVRRAEAVSQEKMGKLTAGMPLPPGMKFPF.

This sequence belongs to the YbaB/EbfC family. As to quaternary structure, homodimer.

It is found in the cytoplasm. Its subcellular location is the nucleoid. Functionally, binds to DNA and alters its conformation. May be involved in regulation of gene expression, nucleoid organization and DNA protection. This Leptothrix cholodnii (strain ATCC 51168 / LMG 8142 / SP-6) (Leptothrix discophora (strain SP-6)) protein is Nucleoid-associated protein Lcho_1975.